We begin with the raw amino-acid sequence, 436 residues long: Serine--tRNA ligase (436 aa).

239 to 241 (TAE) contributes to the L-serine binding site. 270–272 (RLE) is a binding site for ATP. Glutamate 293 contributes to the L-serine binding site. An ATP-binding site is contributed by 357–360 (EISS). Serine 393 is a binding site for L-serine.

It belongs to the class-II aminoacyl-tRNA synthetase family. Type-1 seryl-tRNA synthetase subfamily. As to quaternary structure, homodimer. The tRNA molecule binds across the dimer.

It localises to the cytoplasm. The enzyme catalyses tRNA(Ser) + L-serine + ATP = L-seryl-tRNA(Ser) + AMP + diphosphate + H(+). It carries out the reaction tRNA(Sec) + L-serine + ATP = L-seryl-tRNA(Sec) + AMP + diphosphate + H(+). It participates in aminoacyl-tRNA biosynthesis; selenocysteinyl-tRNA(Sec) biosynthesis; L-seryl-tRNA(Sec) from L-serine and tRNA(Sec): step 1/1. Catalyzes the attachment of serine to tRNA(Ser). Is also able to aminoacylate tRNA(Sec) with serine, to form the misacylated tRNA L-seryl-tRNA(Sec), which will be further converted into selenocysteinyl-tRNA(Sec). The chain is Serine--tRNA ligase from Blochmanniella floridana.